The following is a 532-amino-acid chain: Collagen alpha-1(XXIII) chain (532 aa).

Topologically, residues 1-23 (MGAGERAAGGGGTQDPGAGCGAR) are cytoplasmic. Residues 24-45 (ALGALCLLLSVGSATACLLLGA) traverse the membrane as a helical; Signal-anchor for type II membrane protein segment. At 46-532 (QAAALHGRVA…GLPVPGCWHK (487 aa)) the chain is on the extracellular side. The tract at residues 102–532 (PSECICPPGP…GLPVPGCWHK (431 aa)) is disordered. 4 Collagen-like domains span residues 108–163 (PPGP…FGPR), 173–232 (GPPG…PGKK), 242–297 (GLPG…EQGD), and 313–372 (GPPG…MGLS). 2 stretches are compositionally biased toward low complexity: residues 129–145 (QSGRDGYPGPLGLDGKP) and 157–172 (PGDFGPRGAQGQDGAA). 3 stretches are compositionally biased toward pro residues: residues 174–184 (PPGPPGPPGAR), 241–250 (PGLPGPPGPK), and 314–326 (PPGPQGAPGPPGI). Basic and acidic residues-rich tracts occupy residues 342-354 (DGEKGPKGPKGDP) and 380-393 (PKGEKGESASDHLQ). The segment covering 403-414 (PGPPGPPGPPGP) has biased composition (pro residues). Collagen-like domains follow at residues 404–452 (GPPG…GPPG) and 455–514 (GLPG…PGLD). 2 stretches are compositionally biased toward basic and acidic residues: residues 427-441 (DGAKGEKGASGERGP) and 478-495 (RGEKGDRSERGEKGERGV).

Homotrimer. In terms of processing, undergoes proteolytic cleavage by furin protease to yield a 60 kDa soluble form that forms a homotrimer and exhibits a low affinity interaction with heparin.

It is found in the cell membrane. In Rattus norvegicus (Rat), this protein is Collagen alpha-1(XXIII) chain (Col23a1).